Reading from the N-terminus, the 233-residue chain is MKRIFIVALLFATCLVNAKPSINDADIKREPEPNVAVPPCGDCYQQVGNTCVRVPSLCPSRKREPEPNVAVPPCGDCYQQVGNTCVRVPSLCPSRKREPEPNVAVPPCGDCYQQVGNTCVRVPSLCPSRKREPEPNVAVPPCGDCYQQVGNTCVRVPSLCPSRKREPEPNVAVPPCGDCYQQVGNTCVRVPSLCPSRKREPEPNVAVPPCGDCYQQVGNTCVRVPSLCPSRKR.

An N-terminal signal peptide occupies residues 1–18 (MKRIFIVALLFATCLVNA). 2 consecutive propeptides follow at residues 19–29 (KPSINDADIKR) and 30–33 (EPEP). A Hydroxyproline modification is found at Pro39. Cystine bridges form between Cys40/Cys51 and Cys43/Cys58. 2 propeptides span residues 61–63 (RKR) and 64–67 (EPEP). Hydroxyproline is present on Pro73. Disulfide bonds link Cys74/Cys85 and Cys77/Cys92. Propeptides lie at residues 95 to 97 (RKR) and 98 to 101 (EPEP). At Pro107 the chain carries Hydroxyproline. 2 disulfide bridges follow: Cys108–Cys119 and Cys111–Cys126. 2 consecutive propeptides follow at residues 129–131 (RKR) and 132–135 (EPEP). Position 141 is a hydroxyproline (Pro141). Intrachain disulfides connect Cys142-Cys153 and Cys145-Cys160. 2 propeptides span residues 163–165 (RKR) and 166–169 (EPEP). Pro175 bears the Hydroxyproline mark. 2 cysteine pairs are disulfide-bonded: Cys176–Cys187 and Cys179–Cys194. Propeptides lie at residues 197-199 (RKR) and 200-203 (EPEP). Pro209 bears the Hydroxyproline mark. Disulfide bonds link Cys210-Cys221 and Cys213-Cys228. The propeptide occupies 231–233 (RKR).

It belongs to the sea anemone BBH family. In terms of processing, each Am I peptide may contain 2 disulfide bonds. The precursor protein seems to be processed in the following sequence: release of the signal peptide and of the propeptide, production of six identical 34-residue peptides by cleavage between Arg and Glu, release of four N-terminal and three C-terminal residues from each peptide and hydroxylation of each Pro in position 6 of the resulting 27-residue peptides.

The protein resides in the secreted. It localises to the nematocyst. Its function is as follows. May inhibit voltage-gated sodium channels (Nav). The chain is Delta-actitoxin-Amc1a from Antheopsis maculata (Sea anemone).